Consider the following 188-residue polypeptide: Probable nicotinate-nucleotide adenylyltransferase (188 aa).

Belongs to the NadD family.

It carries out the reaction nicotinate beta-D-ribonucleotide + ATP + H(+) = deamido-NAD(+) + diphosphate. Its pathway is cofactor biosynthesis; NAD(+) biosynthesis; deamido-NAD(+) from nicotinate D-ribonucleotide: step 1/1. Its function is as follows. Catalyzes the reversible adenylation of nicotinate mononucleotide (NaMN) to nicotinic acid adenine dinucleotide (NaAD). This Listeria innocua serovar 6a (strain ATCC BAA-680 / CLIP 11262) protein is Probable nicotinate-nucleotide adenylyltransferase.